The chain runs to 244 residues: MEEEKLEIVGPLEEPLMGNIVPEEINGLDSLTSSDSDSEKPDSPVPINAPIYRMFGRERPIHMVLGGGKPADVLLWRDKKVTLGLLSAVTVIWLLFGFGGRRLLTSLCRGSILFLLLSFLWSNALNKSPENMMDIYIPEKPLLQAASAMTFELNCAFATLRSIALERDIKNFVMAVIGLWLVSVIGNWFSFLSLLYICFVLIHTVPMLYEKYEDEIDPIAEKAVIEMKKHYQVFEAKFLSKIPH.

The 175-residue stretch at Pro70 to His244 folds into the Reticulon domain. The next 3 membrane-spanning stretches (helical) occupy residues Lys80–Gly100, Leu103–Asn123, and Phe172–Leu192.

The protein localises to the endoplasmic reticulum membrane. This chain is Reticulon-like protein B7 (RTNLB7), found in Arabidopsis thaliana (Mouse-ear cress).